Here is a 366-residue protein sequence, read N- to C-terminus: Mitogen-activated protein kinase CPK1 (366 aa).

The Protein kinase domain occupies 17 to 302; sequence KLEEIVGEGA…SPSKRITVEE (286 aa). Residues 22 to 30 and K45 each bind ATP; that span reads VGEGAYGLV. D140 (proton acceptor) is an active-site residue. T181 is subject to Phosphothreonine. The short motif at 181–183 is the TXY element; it reads TEY. At Y183 the chain carries Phosphotyrosine.

The protein belongs to the protein kinase superfamily. CMGC Ser/Thr protein kinase family. MAP kinase subfamily. It depends on Mg(2+) as a cofactor. Dually phosphorylated on Thr-181 and Tyr-183, which activates the enzyme.

It carries out the reaction L-seryl-[protein] + ATP = O-phospho-L-seryl-[protein] + ADP + H(+). The catalysed reaction is L-threonyl-[protein] + ATP = O-phospho-L-threonyl-[protein] + ADP + H(+). Its activity is regulated as follows. Activated by tyrosine and threonine phosphorylation. Functionally, responds to activation by environmental stress by phosphorylating downstream targets. The chain is Mitogen-activated protein kinase CPK1 (CPK1) from Cryptococcus neoformans var. neoformans serotype D (strain B-3501A) (Filobasidiella neoformans).